The chain runs to 739 residues: Copalyl diphosphate synthase 1 (739 aa).

Lys154 serves as a coordination point for substrate. Mg(2+) contacts are provided by Asp287 and Asp289. Residues 287-290 (DADD) carry the DXDD motif motif. Lys373 is a substrate binding site.

Belongs to the terpene synthase family. It depends on Mg(2+) as a cofactor.

It catalyses the reaction (2E,6E,10E)-geranylgeranyl diphosphate = (+)-copalyl diphosphate. The protein operates within secondary metabolite biosynthesis; terpenoid biosynthesis. Functionally, monofunctional diterpene synthase converting geranylgeranyl diphosphate to copalyl diphosphate. This is Copalyl diphosphate synthase 1 (CPS1) from Selaginella moellendorffii (Spikemoss).